The sequence spans 209 residues: Ribonuclease HII (209 aa).

The RNase H type-2 domain maps to 7 to 198 (GPVAGVDEAG…VAKAHQEWLH (192 aa)). 3 residues coordinate a divalent metal cation: Asp13, Glu14, and Asp107.

The protein belongs to the RNase HII family. Mn(2+) serves as cofactor. Mg(2+) is required as a cofactor.

It localises to the cytoplasm. The catalysed reaction is Endonucleolytic cleavage to 5'-phosphomonoester.. Functionally, endonuclease that specifically degrades the RNA of RNA-DNA hybrids. The sequence is that of Ribonuclease HII from Corynebacterium glutamicum (strain ATCC 13032 / DSM 20300 / JCM 1318 / BCRC 11384 / CCUG 27702 / LMG 3730 / NBRC 12168 / NCIMB 10025 / NRRL B-2784 / 534).